A 160-amino-acid polypeptide reads, in one-letter code: SsrA-binding protein (160 aa).

Positions 130–160 (LAKGKKKHDKRADQKEQDWQRQKQRLMKHKV) are disordered. Residues 139-150 (KRADQKEQDWQR) show a composition bias toward basic and acidic residues. The segment covering 151-160 (QKQRLMKHKV) has biased composition (basic residues).

It belongs to the SmpB family.

Its subcellular location is the cytoplasm. Required for rescue of stalled ribosomes mediated by trans-translation. Binds to transfer-messenger RNA (tmRNA), required for stable association of tmRNA with ribosomes. tmRNA and SmpB together mimic tRNA shape, replacing the anticodon stem-loop with SmpB. tmRNA is encoded by the ssrA gene; the 2 termini fold to resemble tRNA(Ala) and it encodes a 'tag peptide', a short internal open reading frame. During trans-translation Ala-aminoacylated tmRNA acts like a tRNA, entering the A-site of stalled ribosomes, displacing the stalled mRNA. The ribosome then switches to translate the ORF on the tmRNA; the nascent peptide is terminated with the 'tag peptide' encoded by the tmRNA and targeted for degradation. The ribosome is freed to recommence translation, which seems to be the essential function of trans-translation. In Alkalilimnicola ehrlichii (strain ATCC BAA-1101 / DSM 17681 / MLHE-1), this protein is SsrA-binding protein.